The chain runs to 555 residues: Glucosylglycerate phosphorylase (555 aa).

Aspartate 231 (nucleophile) is an active-site residue.

This sequence belongs to the glycosyl hydrolase 13 family. Glucosylglycerate phosphorylase subfamily.

It catalyses the reaction (2R)-2-O-(alpha-D-glucopyranosyl)-glycerate + phosphate = (R)-glycerate + alpha-D-glucose 1-phosphate. Functionally, catalyzes the reversible phosphorolysis of glucosylglycerate into alpha-D-glucose 1-phosphate (Glc1P) and D-glycerate. May be a regulator of intracellular levels of glucosylglycerate, a compatible solute that primarily protects organisms facing salt stress and very specific nutritional constraints. Has a very strict substrate specificity. Cannot catalyze the phosphorolysis of sucrose or synthesize sucrose from Glc1P and D-fructose. In Allomeiothermus silvanus (strain ATCC 700542 / DSM 9946 / NBRC 106475 / NCIMB 13440 / VI-R2) (Thermus silvanus), this protein is Glucosylglycerate phosphorylase.